The following is a 246-amino-acid chain: Proteasome subunit alpha (246 aa).

Belongs to the peptidase T1A family. The 20S proteasome core is composed of 14 alpha and 14 beta subunits that assemble into four stacked heptameric rings, resulting in a barrel-shaped structure. The two inner rings, each composed of seven catalytic beta subunits, are sandwiched by two outer rings, each composed of seven alpha subunits. The catalytic chamber with the active sites is on the inside of the barrel. Has probably a gated structure, the ends of the cylinder being occluded by the N-termini of the alpha-subunits. Is likely capped at one or both ends by the proteasome regulatory ATPase, PAN.

It is found in the cytoplasm. Its activity is regulated as follows. The formation of the proteasomal ATPase PAN-20S proteasome complex, via the docking of the C-termini of PAN into the intersubunit pockets in the alpha-rings, triggers opening of the gate for substrate entry. Interconversion between the open-gate and close-gate conformations leads to a dynamic regulation of the 20S proteasome proteolysis activity. Component of the proteasome core, a large protease complex with broad specificity involved in protein degradation. The protein is Proteasome subunit alpha of Archaeoglobus fulgidus (strain ATCC 49558 / DSM 4304 / JCM 9628 / NBRC 100126 / VC-16).